A 559-amino-acid polypeptide reads, in one-letter code: Potassium-transporting ATPase potassium-binding subunit (559 aa).

Helical transmembrane passes span 5–25 (GFLL…PLGS), 27–47 (LARL…RILW), 63–83 (LLAL…LLFW), 132–152 (GLTV…FALI), 170–190 (LVRI…LFFI), 253–273 (LAQM…FGEA), 283–303 (LLWA…WAEV), 327–347 (FGVL…CGAV), 356–376 (ALGG…FGGV), 379–399 (GLYG…LMIG), 416–436 (MTAL…ALAM), 484–504 (LLAF…MAIA), and 524–544 (GALF…LTFI).

This sequence belongs to the KdpA family. In terms of assembly, the system is composed of three essential subunits: KdpA, KdpB and KdpC.

The protein resides in the cell inner membrane. Part of the high-affinity ATP-driven potassium transport (or Kdp) system, which catalyzes the hydrolysis of ATP coupled with the electrogenic transport of potassium into the cytoplasm. This subunit binds the periplasmic potassium ions and delivers the ions to the membrane domain of KdpB through an intramembrane tunnel. The sequence is that of Potassium-transporting ATPase potassium-binding subunit from Salmonella newport (strain SL254).